The following is a 419-amino-acid chain: Synaptotagmin-2 (419 aa).

At 1–62 the chain is on the vesicular side; sequence MRNIFKRNQE…NEINKIPLPP (62 aa). The interval 16–39 is disordered; the sequence is ATTTATMPIGPVDNSTESGGAGES. Asparagine 29 is a glycosylation site (N-linked (GlcNAc...) asparagine). Residues 63-83 traverse the membrane as a helical segment; the sequence is WALIAIAVVAGLLLLTCCFCI. The Cytoplasmic portion of the chain corresponds to 84–419; the sequence is CKKCCCKKKK…EVDALLGKNK (336 aa). The disordered stretch occupies residues 99 to 138; the sequence is GKGMKNAMNMKDMKGGQDDDDAETGLTEGEGEGEEEKEPE. Acidic residues predominate over residues 116–136; the sequence is DDDDAETGLTEGEGEGEEEKE. 2 positions are modified to phosphothreonine: threonine 122 and threonine 125. The tract at residues 133-379 is phospholipid binding; sequence EEKEPENLGK…AIGKIFVGSN (247 aa). C2 domains are found at residues 139-258 and 270-403; these read NLGK…EEWR and KLGD…AQWH. Ca(2+)-binding residues include leucine 169, aspartate 170, and aspartate 176. The residue at position 199 (threonine 199) is a Phosphothreonine. Residue tyrosine 227 is modified to Phosphotyrosine. Ca(2+) contacts are provided by aspartate 228, phenylalanine 229, aspartate 230, serine 233, lysine 234, aspartate 236, aspartate 301, aspartate 307, aspartate 361, and aspartate 363. Threonine 383 is subject to Phosphothreonine.

Belongs to the synaptotagmin family. In terms of assembly, homotetramer. Heterodimer; heterodimerizes with SYT1 in presence of calcium. Interacts with STON2. Interacts with SCAMP5. Interacts with PRRT2. Ca(2+) serves as cofactor. Phosphorylation at Thr-199 by WNK1, changes the calcium requirement for SYT2-binding to phospholipid membranes. As to expression, expressed at the neuromuscular junction. Expressed in melanocytes.

It is found in the cytoplasmic vesicle. Its subcellular location is the secretory vesicle. The protein localises to the synaptic vesicle membrane. The protein resides in the chromaffin granule membrane. It localises to the cytoplasm. Its function is as follows. Exhibits calcium-dependent phospholipid and inositol polyphosphate binding properties. May have a regulatory role in the membrane interactions during trafficking of synaptic vesicles at the active zone of the synapse. Plays a role in dendrite formation by melanocytes. The protein is Synaptotagmin-2 of Homo sapiens (Human).